Reading from the N-terminus, the 388-residue chain is tRNA (guanine(26)-N(2))-dimethyltransferase (388 aa).

The 380-residue stretch at 4–383 folds into the Trm1 methyltransferase domain; that stretch reads RTIVEGTTKI…APIAEIKKII (380 aa). S-adenosyl-L-methionine-binding residues include Arg-41, Arg-78, Asp-94, and Ala-123. Zn(2+) is bound by residues Cys-251, Cys-254, Cys-271, and Cys-274.

This sequence belongs to the class I-like SAM-binding methyltransferase superfamily. Trm1 family.

It catalyses the reaction guanosine(26) in tRNA + 2 S-adenosyl-L-methionine = N(2)-dimethylguanosine(26) in tRNA + 2 S-adenosyl-L-homocysteine + 2 H(+). Dimethylates a single guanine residue at position 26 of a number of tRNAs using S-adenosyl-L-methionine as donor of the methyl groups. The polypeptide is tRNA (guanine(26)-N(2))-dimethyltransferase (Methanosarcina acetivorans (strain ATCC 35395 / DSM 2834 / JCM 12185 / C2A)).